We begin with the raw amino-acid sequence, 419 residues long: UDP-N-acetylglucosamine 1-carboxyvinyltransferase (419 aa).

22-23 (KN) provides a ligand contact to phosphoenolpyruvate. Position 91 (R91) interacts with UDP-N-acetyl-alpha-D-glucosamine. The Proton donor role is filled by C115. A 2-(S-cysteinyl)pyruvic acid O-phosphothioketal modification is found at C115. Residues 120 to 124 (RPVDL), 160 to 163 (KVSV), D305, and V327 contribute to the UDP-N-acetyl-alpha-D-glucosamine site.

It belongs to the EPSP synthase family. MurA subfamily.

It is found in the cytoplasm. The enzyme catalyses phosphoenolpyruvate + UDP-N-acetyl-alpha-D-glucosamine = UDP-N-acetyl-3-O-(1-carboxyvinyl)-alpha-D-glucosamine + phosphate. It participates in cell wall biogenesis; peptidoglycan biosynthesis. Cell wall formation. Adds enolpyruvyl to UDP-N-acetylglucosamine. The sequence is that of UDP-N-acetylglucosamine 1-carboxyvinyltransferase from Salmonella arizonae (strain ATCC BAA-731 / CDC346-86 / RSK2980).